The sequence spans 85 residues: UPF0335 protein WP0746 (85 aa).

It belongs to the UPF0335 family.

The sequence is that of UPF0335 protein WP0746 from Wolbachia pipientis subsp. Culex pipiens (strain wPip).